Here is a 161-residue protein sequence, read N- to C-terminus: uncharacterized protein (161 aa).

Disordered regions lie at residues 47–83 (KPAK…NNIN) and 104–137 (RRLQ…SKNY). Basic residues predominate over residues 50–64 (KRNIHGHNNHTRSSN). Low complexity-rich tracts occupy residues 73 to 83 (NINHNNNNNIN) and 115 to 130 (SSSS…TNDN).

This is an uncharacterized protein from Dictyostelium discoideum (Social amoeba).